We begin with the raw amino-acid sequence, 82 residues long: MSDNIRTLQGRVLSNKMDKSITVAIERKVKHPLYGKYLKRTTKIHAHDEQNQCNAGDVVTIRECRPLSKTKSWTLVEVVSKA.

Belongs to the universal ribosomal protein uS17 family. In terms of assembly, part of the 30S ribosomal subunit.

Functionally, one of the primary rRNA binding proteins, it binds specifically to the 5'-end of 16S ribosomal RNA. This is Small ribosomal subunit protein uS17 from Shewanella sediminis (strain HAW-EB3).